Reading from the N-terminus, the 223-residue chain is Pleckstrin homology domain-containing family B member 1 (223 aa).

A PH domain is found at 2 to 109 (ALVRGGWLWR…WKTALMEANS (108 aa)).

Homodimer. Interacts (via PH domain) with MYO1C. Interacts (via PH domain) with MYO7A. Binds transducins. In terms of tissue distribution, highly expressed in photoreceptor cells, oligodendrocytes and throughout the myelinated parts of the central nervous system. Detected in brain, liver, kidney, spleen and trachea.

It localises to the membrane. It is found in the cytoplasm. This is Pleckstrin homology domain-containing family B member 1 (Plekhb1) from Rattus norvegicus (Rat).